The chain runs to 924 residues: DNA polymerase (924 aa).

Positions 235–386 constitute a 3'-5' exonuclease domain; that stretch reads YPMSQQPKIV…DDCDVTFRLS (152 aa).

It belongs to the DNA polymerase type-A family.

It carries out the reaction DNA(n) + a 2'-deoxyribonucleoside 5'-triphosphate = DNA(n+1) + diphosphate. Replicates viral genomic DNA. This polymerase possesses two enzymatic activities: DNA synthesis (polymerase) and an exonucleolytic activity that degrades single-stranded DNA in the 3'-5' direction. In Bacillus phage SP01 (Bacteriophage SP01), this protein is DNA polymerase (31).